The chain runs to 141 residues: Lutropin subunit beta (141 aa).

An N-terminal signal peptide occupies residues 1–20 (MEMLQGLLLWLLLSMGGARA). Intrachain disulfides connect Cys29-Cys77, Cys43-Cys92, Cys46-Cys130, Cys54-Cys108, Cys58-Cys110, and Cys113-Cys120. N-linked (GlcNAc...) asparagine glycans are attached at residues Asn33 and Asn50.

Belongs to the glycoprotein hormones subunit beta family. Heterodimer of a common alpha chain and a unique beta chain which confers biological specificity to thyrotropin, lutropin, follitropin and gonadotropin.

It localises to the secreted. Promotes spermatogenesis and ovulation by stimulating the testes and ovaries to synthesize steroids. In Macaca fascicularis (Crab-eating macaque), this protein is Lutropin subunit beta (LHB).